The sequence spans 107 residues: uncharacterized protein (107 aa).

A helical transmembrane segment spans residues 12–32 (IILNIFLALLLVYFIFHCIYG).

It localises to the membrane. This is an uncharacterized protein from Rickettsia prowazekii (strain Madrid E).